Consider the following 304-residue polypeptide: D-alanine--D-alanine ligase (304 aa).

Residues 101–298 (KKIFIKNKIL…FIKLIEWILK (198 aa)) enclose the ATP-grasp domain. Residue 131 to 184 (EKNLKFPVVVKPINEGSSVHVYICDKTNILKNLKVLKSYNEILIEEFIPGREIQ) coordinates ATP. Residues aspartate 253, glutamate 265, and asparagine 267 each coordinate Mg(2+).

It belongs to the D-alanine--D-alanine ligase family. The cofactor is Mg(2+). Mn(2+) is required as a cofactor.

It localises to the cytoplasm. It carries out the reaction 2 D-alanine + ATP = D-alanyl-D-alanine + ADP + phosphate + H(+). It functions in the pathway cell wall biogenesis; peptidoglycan biosynthesis. In terms of biological role, cell wall formation. The chain is D-alanine--D-alanine ligase from Pelagibacter ubique (strain HTCC1062).